The chain runs to 695 residues: DNA ligase (695 aa).

30–34 contributes to the NAD(+) binding site; it reads DADFD. Residues 52-71 are disordered; that stretch reads TGASPTEEVAPAPPTSSPFR. Residues 81–82 and glutamate 106 each bind NAD(+); that span reads SL. Lysine 108 functions as the N6-AMP-lysine intermediate in the catalytic mechanism. NAD(+) contacts are provided by arginine 129, glutamate 169, lysine 285, and lysine 309. Residues cysteine 403, cysteine 406, cysteine 422, and cysteine 428 each coordinate Zn(2+). Residues 599 to 688 form the BRCT domain; the sequence is VDSALLEGLT…APSSGDDAST (90 aa). Positions 676-695 are disordered; sequence ENGAPSSGDDASTSADSVDD. Low complexity predominate over residues 679-695; it reads APSSGDDASTSADSVDD.

The protein belongs to the NAD-dependent DNA ligase family. LigA subfamily. Mg(2+) is required as a cofactor. The cofactor is Mn(2+).

The enzyme catalyses NAD(+) + (deoxyribonucleotide)n-3'-hydroxyl + 5'-phospho-(deoxyribonucleotide)m = (deoxyribonucleotide)n+m + AMP + beta-nicotinamide D-nucleotide.. DNA ligase that catalyzes the formation of phosphodiester linkages between 5'-phosphoryl and 3'-hydroxyl groups in double-stranded DNA using NAD as a coenzyme and as the energy source for the reaction. It is essential for DNA replication and repair of damaged DNA. In Corynebacterium jeikeium (strain K411), this protein is DNA ligase.